Consider the following 170-residue polypeptide: Lipoprotein signal peptidase (170 aa).

4 consecutive transmembrane segments (helical) span residues leucine 11–phenylalanine 31, isoleucine 41–serine 61, tryptophan 69–leucine 89, and asparagine 95–tyrosine 115. Residues aspartate 125 and aspartate 144 contribute to the active site. Residues tyrosine 136 to leucine 156 form a helical membrane-spanning segment.

The protein belongs to the peptidase A8 family.

Its subcellular location is the cell inner membrane. The enzyme catalyses Release of signal peptides from bacterial membrane prolipoproteins. Hydrolyzes -Xaa-Yaa-Zaa-|-(S,diacylglyceryl)Cys-, in which Xaa is hydrophobic (preferably Leu), and Yaa (Ala or Ser) and Zaa (Gly or Ala) have small, neutral side chains.. Its pathway is protein modification; lipoprotein biosynthesis (signal peptide cleavage). Functionally, this protein specifically catalyzes the removal of signal peptides from prolipoproteins. This is Lipoprotein signal peptidase from Pseudomonas fluorescens (strain ATCC BAA-477 / NRRL B-23932 / Pf-5).